Here is a 389-residue protein sequence, read N- to C-terminus: DEAD-box ATP-dependent RNA helicase CshC (389 aa).

Residues 1–26 (MIKDMQPFLQQAWEKAGFKELTEIQK) carry the Q motif motif. In terms of domain architecture, Helicase ATP-binding spans 29–199 (IPTILEGQDV…RDLAVEPQLV (171 aa)). ATP is bound at residue 42–49 (SPTGTGKT). The DEAD box signature appears at 147 to 150 (DEFD). One can recognise a Helicase C-terminal domain in the interval 209–379 (LVEHTYIICE…TKPKAPKKKK (171 aa)). The disordered stretch occupies residues 368–389 (VETKPKAPKKKKPAFTGKKKPR). Over residues 373-389 (KAPKKKKPAFTGKKKPR) the composition is skewed to basic residues.

It catalyses the reaction ATP + H2O = ADP + phosphate + H(+). Its function is as follows. DEAD-box RNA helicase. Probably has an RNA-dependent ATPase activity and a 3' to 5' RNA helicase activity that uses the energy of ATP hydrolysis to destabilize and unwind short RNA duplexes. In Bacillus cereus (strain ATCC 14579 / DSM 31 / CCUG 7414 / JCM 2152 / NBRC 15305 / NCIMB 9373 / NCTC 2599 / NRRL B-3711), this protein is DEAD-box ATP-dependent RNA helicase CshC (cshC).